We begin with the raw amino-acid sequence, 1040 residues long: DNA cross-link repair 1A protein (1040 aa).

The tract at residues 1-190 (MLEDISEEDI…RAGDHPFSSP (190 aa)) is nuclear localization region. Residues 15-76 (SKRKPKRVDP…LGNAGCQTSV (62 aa)) are disordered. Basic and acidic residues predominate over residues 53-65 (RAAEAKEVKDHEV). Residues 119–149 (DGYCPNCQMPFSSLIGQTPRWHVFECLDSPP) form a UBZ4-type zinc finger. Positions 122, 125, 140, and 144 each coordinate Zn(2+). Glycyl lysine isopeptide (Lys-Gly) (interchain with G-Cter in SUMO2) cross-links involve residues Lys202, Lys236, Lys269, Lys353, Lys361, Lys429, Lys488, Lys508, Lys517, Lys533, and Lys536. A nuclear focus formation region spans residues 396–614 (LPYDLACTGG…KSLSDLEFDA (219 aa)). Disordered regions lie at residues 582-602 (GINL…CKRK) and 623-651 (SVEL…ACQK). At Ser590 the chain carries Phosphoserine. Residues Lys668, Lys670, and Lys674 each participate in a glycyl lysine isopeptide (Lys-Gly) (interchain with G-Cter in SUMO2) cross-link.

Belongs to the DNA repair metallo-beta-lactamase (DRMBL) family. Binds constitutively to TP53BP1. Binds CDC27, which is itself a component of the anaphase promoting complex (APC). Binds PIAS1. In terms of tissue distribution, expressed in brain, heart, kidney, liver, pancreas, placenta and skeletal muscle.

The protein resides in the nucleus. The catalysed reaction is a beta-lactam + H2O = a substituted beta-amino acid. Its activity is regulated as follows. Beta-lactamase activity is inhibited by sulbactam. May be required for DNA interstrand cross-link repair. Also required for checkpoint mediated cell cycle arrest in early prophase in response to mitotic spindle poisons. Possesses beta-lactamase activity, catalyzing the hydrolysis of penicillin G and nitrocefin. Exhibits no activity towards other beta-lactam antibiotic classes including cephalosporins (cefotaxime) and carbapenems (imipenem). This chain is DNA cross-link repair 1A protein (DCLRE1A), found in Homo sapiens (Human).